The primary structure comprises 297 residues: Cell division protein ZipA (297 aa).

A topological domain (periplasmic) is located at residue methionine 1. Residues 2-22 (EIGLREWLILIGIIVIAGILF) traverse the membrane as a helical segment. Over 23–297 (DGWRRMRGGK…FERRALTQKR (275 aa)) the chain is Cytoplasmic. The tract at residues 48 to 150 (DEEGGSAEVL…GAAPASSSVK (103 aa)) is disordered. A compositionally biased stretch (basic and acidic residues) spans 83-92 (ARDREREPKP). A compositionally biased stretch (acidic residues) spans 124-133 (LFADSDDDFA). Residues 136–149 (NNRSSGAAPASSSV) show a composition bias toward polar residues.

It belongs to the ZipA family. Interacts with FtsZ via their C-terminal domains.

The protein localises to the cell inner membrane. In terms of biological role, essential cell division protein that stabilizes the FtsZ protofilaments by cross-linking them and that serves as a cytoplasmic membrane anchor for the Z ring. Also required for the recruitment to the septal ring of downstream cell division proteins. The sequence is that of Cell division protein ZipA from Pseudomonas putida (strain ATCC 700007 / DSM 6899 / JCM 31910 / BCRC 17059 / LMG 24140 / F1).